Consider the following 107-residue polypeptide: Death-associated protein-like 1 (107 aa).

A disordered region spans residues 1–23 (MANEVQDLLSPRKGGHPPAVKAG).

As to expression, expressed in hair follicle (at protein level).

Functionally, may play a role in the early stages of epithelial differentiation or in apoptosis. This chain is Death-associated protein-like 1 (DAPL1), found in Homo sapiens (Human).